Here is a 152-residue protein sequence, read N- to C-terminus: uncharacterized protein (152 aa).

The chain crosses the membrane as a helical span at residues 7–27 (TLSVIVFLISLIIIFGIYFSS).

Its subcellular location is the membrane. This is an uncharacterized protein from Methanocaldococcus jannaschii (strain ATCC 43067 / DSM 2661 / JAL-1 / JCM 10045 / NBRC 100440) (Methanococcus jannaschii).